A 422-amino-acid polypeptide reads, in one-letter code: Platelet-activating factor acetylhydrolase (422 aa).

The signal sequence occupies residues 1–21 (MASLWVRARRVFMKSRASGFS). The Nucleophile role is filled by Ser266. Asp289 functions as the Charge relay system in the catalytic mechanism. N-linked (GlcNAc...) asparagine glycosylation occurs at Asn331. Catalysis depends on His345, which acts as the Charge relay system.

It belongs to the AB hydrolase superfamily. Lipase family. As to expression, plasma.

The protein localises to the secreted. It localises to the extracellular space. It carries out the reaction a 1-O-alkyl-2-acetyl-sn-glycero-3-phosphocholine + H2O = a 1-O-alkyl-sn-glycero-3-phosphocholine + acetate + H(+). Its function is as follows. Modulates the action of platelet-activating factor (PAF) by hydrolyzing the sn-2 ester bond to yield the biologically inactive lyso-PAF. Has a specificity for substrates with a short residue at the sn-2 position. It is inactive against long-chain phospholipids. This chain is Platelet-activating factor acetylhydrolase (PLA2G7), found in Gallus gallus (Chicken).